The sequence spans 32 residues: Cytochrome b6-f complex subunit 7 (32 aa).

Residues 5–25 (FIASASISFIITLIGLTLGFA) traverse the membrane as a helical segment.

The protein belongs to the PetM family. As to quaternary structure, the 4 large subunits of the cytochrome b6-f complex are cytochrome b6, subunit IV (17 kDa polypeptide, PetD), cytochrome f and the Rieske protein, while the 4 small subunits are PetG, PetL, PetM and PetN. The complex functions as a dimer.

It is found in the plastid. The protein resides in the chloroplast thylakoid membrane. Its function is as follows. Component of the cytochrome b6-f complex, which mediates electron transfer between photosystem II (PSII) and photosystem I (PSI), cyclic electron flow around PSI, and state transitions. This chain is Cytochrome b6-f complex subunit 7, found in Guillardia theta (Cryptophyte).